The following is a 193-amino-acid chain: Interleukin-18 (193 aa).

Residues 1–36 (MAAEQVEDNCISFVEMKFINNTLYFVAENDEDLESD) constitute a propeptide that is removed on maturation.

This sequence belongs to the IL-1 family. In terms of assembly, forms a ternary complex with ligand-binding receptor subunit IL18R1 and signaling receptor subunit IL18RAP at the plasma membrane. Mature IL18 first binds to IL18R1 forming a low affinity binary complex, which then interacts with IL18RAP to form a high affinity ternary complex that signals inside the cell. Interacts with cargo receptor TMED10; the interaction mediates the translocation from the cytoplasm into the ERGIC (endoplasmic reticulum-Golgi intermediate compartment) and thereby secretion. In terms of processing, the pro-IL-18 precursor is processed by CASP1, CASP4 or CASP5 to yield its mature, active form. The pro-IL-18 precursor features autoinhibitory interactions between the propeptide and the post-cleavage-site region, preventing recognition by the IL18R1 receptor. Processing by CASP1, CASP4 or CASP5 induces conformational changes to generate critical receptor-binding sites. The mature form is then secreted and released in the extracellular milieu by passing through the gasdermin-D (GSDMD) pore. In contrast, cleavage by CASP3 inactivates IL18.

The protein resides in the cytoplasm. It localises to the cytosol. Its subcellular location is the secreted. Functionally, pro-inflammatory cytokine primarily involved in epithelial barrier repair, polarized T-helper 1 (Th1) cell and natural killer (NK) cell immune responses. Upon binding to IL18R1 and IL18RAP, forms a signaling ternary complex which activates NF-kappa-B, triggering synthesis of inflammatory mediators. Synergizes with IL12/interleukin-12 to induce IFNG synthesis from T-helper 1 (Th1) cells and natural killer (NK) cells. Involved in transduction of inflammation downstream of pyroptosis: its mature form is specifically released in the extracellular milieu by passing through the gasdermin-D (GSDMD) pore. This Boselaphus tragocamelus (Nilgai) protein is Interleukin-18 (IL18).